Here is a 521-residue protein sequence, read N- to C-terminus: BAR/IMD domain-containing adapter protein 2 (521 aa).

The 250-residue stretch at 1–250 folds into the IMD domain; sequence MSLSRSEEMH…VQLMQQIASS (250 aa). The stretch at 132–153 forms a coiled coil; the sequence is DALDKCQAELKKLRKKSQGSKN. Residues Ser-262, Ser-324, Ser-326, and Ser-337 each carry the phosphoserine modification. Positions 299-370 are disordered; that stretch reads VMNGVAGPDS…TLPRSSSMAA (72 aa). Low complexity predominate over residues 321-335; it reads QPKSLSPPQSQSKLS. Thr-341 bears the Phosphothreonine mark. Phosphoserine is present on Ser-347. Residues 349–368 show a composition bias toward polar residues; that stretch reads TPKNSYATTENKTLPRSSSM. Phosphothreonine is present on Thr-361. Ser-367, Ser-385, Ser-396, and Ser-455 each carry phosphoserine. The region spanning 375-438 is the SH3 domain; sequence NGRMRVKAIF…PFSYTRVLDS (64 aa). Residues 445-480 are disordered; the sequence is HMSLQQGKSSSTGNLLDKDDLAVPPPDYGTSSRAFP. The segment covering 447-458 has biased composition (polar residues); the sequence is SLQQGKSSSTGN.

As to quaternary structure, homodimer. Interacts with CDC42 and RAC1 that have been activated by GTP binding. Interacts with ATN1, ADGRB1, DIAPH1, EPS8, SHANK1, SHANK2, SHANK3, TIAM1, WASF1 and WASF2. Interacts with ENAH after recruitment of CDC42. Phosphorylated on tyrosine residues by INSR in response to insulin treatment.

It localises to the cytoplasm. The protein localises to the membrane. It is found in the cell projection. Its subcellular location is the filopodium. The protein resides in the ruffle. It localises to the cytoskeleton. Functionally, adapter protein that links membrane-bound small G-proteins to cytoplasmic effector proteins. Necessary for CDC42-mediated reorganization of the actin cytoskeleton and for RAC1-mediated membrane ruffling. Involved in the regulation of the actin cytoskeleton by WASF family members and the Arp2/3 complex. Plays a role in neurite growth. Acts syngeristically with ENAH to promote filipodia formation. Plays a role in the reorganization of the actin cytoskeleton in response to bacterial infection. Participates in actin bundling when associated with EPS8, promoting filopodial protrusions. This Cricetulus griseus (Chinese hamster) protein is BAR/IMD domain-containing adapter protein 2 (BAIAP2).